We begin with the raw amino-acid sequence, 304 residues long: Acetylglutamate kinase (304 aa).

Substrate is bound by residues 75-76, Arg97, and Asn196; that span reads GG.

It belongs to the acetylglutamate kinase family. ArgB subfamily.

The protein resides in the cytoplasm. The catalysed reaction is N-acetyl-L-glutamate + ATP = N-acetyl-L-glutamyl 5-phosphate + ADP. Its pathway is amino-acid biosynthesis; L-arginine biosynthesis; N(2)-acetyl-L-ornithine from L-glutamate: step 2/4. Functionally, catalyzes the ATP-dependent phosphorylation of N-acetyl-L-glutamate. This chain is Acetylglutamate kinase, found in Corynebacterium urealyticum (strain ATCC 43042 / DSM 7109).